The sequence spans 834 residues: Striatin-interacting protein 2 (834 aa).

The segment at 1 to 48 (MEDPAAPGTGGPPANGNGNGGGKGKQAAPKGREAFRSQRRESEGSVDC) is disordered. Positions 8-24 (GTGGPPANGNGNGGGKG) are enriched in gly residues. Over residues 30–43 (KGREAFRSQRRESE) the composition is skewed to basic and acidic residues. Phosphoserine occurs at positions 318, 329, and 354. The disordered stretch occupies residues 321-345 (SYTLDLGESQLAPPPSKLRGRRGSR). A disordered region spans residues 360 to 382 (ERDLFKTEEPATEEEEESAGDGE). The segment covering 369 to 379 (PATEEEEESAG) has biased composition (acidic residues).

Belongs to the STRIP family. As to quaternary structure, part of the core of STRIPAK complexes composed of PP2A catalytic and scaffolding subunits, the striatins (PP2A regulatory subunits), the striatin-associated proteins MOB4, STRIP1 and STRIP2, PDCD10 and members of the STE20 kinases, such as STK24 and STK26. Interacts with CTTNBP2NL.

It is found in the cytoplasm. In terms of biological role, plays a role in the regulation of cell morphology and cytoskeletal organization. Required in the control of cell shape. Calmodulin-binding scaffolding protein which is the center of the striatin-interacting phosphatase and kinase (STRIPAK) complexes. STRIPAK complexes have critical roles in protein (de)phosphorylation and are regulators of multiple signaling pathways including Hippo, MAPK, nuclear receptor and cytoskeleton remodeling. Different types of STRIPAK complexes are involved in a variety of biological processes such as cell growth, differentiation, apoptosis, metabolism and immune regulation. This chain is Striatin-interacting protein 2, found in Homo sapiens (Human).